Here is a 320-residue protein sequence, read N- to C-terminus: Aminoacyl tRNA synthase complex-interacting multifunctional protein 2 (320 aa).

Serine 36 bears the Phosphoserine mark. Residues 82 to 162 (TPDADLDVTN…HTHSSVKNVP (81 aa)) are interaction with PRKN. An interaction with TP53 region spans residues 162-225 (PENLVKCFGE…FLFSLFGQKH (64 aa)). Residues 220–317 (LFGQKHNAVT…NLAPFSTALQ (98 aa)) form the GST C-terminal domain.

As to quaternary structure, part of the multisynthetase complex (MSC), a multisubunit complex that groups tRNA ligases for Arg (RARS1), Asp (DARS1), Gln (QARS1), Ile (IARS1), Leu (LARS1), Lys (KARS1), Met (MARS1) the bifunctional ligase for Glu and Pro (EPRS1) and the auxiliary subunits AIMP1/p43, AIMP2/p38 and EEF1E1/p18. Interacts (via N-terminus) with KARS1. Interacts with EPRS1. Forms a linear complex that contains MARS1, EEF1E1, EPRS1 and AIMP2 that is at the core of the multisubunit complex. Binds FUBP1 (via C-terminus). Interacts in both its unphosphorylated and phosphorylated forms with p53/TP53 (via N-terminus) in the nucleus following UV irradiation. Interacts (via N-terminus) with PRKN/parkin (via first RING-type domain). Interacts with TARS3. In terms of processing, phosphorylated on serine residues in response to UV irradiation. Ubiquitinated by PRKN, leading to its degradation by the proteasome.

The protein resides in the cytoplasm. The protein localises to the cytosol. Its subcellular location is the nucleus. In terms of biological role, required for assembly and stability of the aminoacyl-tRNA synthase complex. Mediates ubiquitination and degradation of FUBP1, a transcriptional activator of MYC, leading to MYC down-regulation which is required for aveolar type II cell differentiation. Blocks MDM2-mediated ubiquitination and degradation of p53/TP53. Functions as a proapoptotic factor. The chain is Aminoacyl tRNA synthase complex-interacting multifunctional protein 2 (Aimp2) from Mus musculus (Mouse).